The sequence spans 467 residues: UDP-N-acetylmuramate--L-alanine ligase (467 aa).

Position 114–120 (Gly114–Thr120) interacts with ATP.

Belongs to the MurCDEF family.

Its subcellular location is the cytoplasm. It carries out the reaction UDP-N-acetyl-alpha-D-muramate + L-alanine + ATP = UDP-N-acetyl-alpha-D-muramoyl-L-alanine + ADP + phosphate + H(+). It participates in cell wall biogenesis; peptidoglycan biosynthesis. Its function is as follows. Cell wall formation. This chain is UDP-N-acetylmuramate--L-alanine ligase, found in Nitrobacter winogradskyi (strain ATCC 25391 / DSM 10237 / CIP 104748 / NCIMB 11846 / Nb-255).